Reading from the N-terminus, the 156-residue chain is Snaclec A4 (156 aa).

The first 23 residues, Met1–Ala23, serve as a signal peptide directing secretion. A disulfide bond links Cys27 and Cys38. The C-type lectin domain maps to His34–Glu155. An N-linked (GlcNAc...) asparagine glycan is attached at Asn45. Intrachain disulfides connect Cys55–Cys154 and Cys129–Cys146.

The protein belongs to the snaclec family. In terms of assembly, heterodimer; disulfide-linked. As to expression, expressed by the venom gland.

The protein localises to the secreted. Its function is as follows. Interferes with one step of hemostasis (modulation of platelet aggregation, or coagulation cascade, for example). The sequence is that of Snaclec A4 from Macrovipera lebetinus (Levantine viper).